Consider the following 409-residue polypeptide: Elongation factor Tu (409 aa).

The tr-type G domain occupies 10-214; it reads KPHVNIGTIG…AVDSYIPTPE (205 aa). Residues 19–26 are G1; that stretch reads GHVDHGKT. 19–26 is a binding site for GTP; that stretch reads GHVDHGKT. Residue Thr-26 participates in Mg(2+) binding. The tract at residues 60 to 64 is G2; the sequence is GITIN. Residues 81–84 are G3; it reads DCPG. GTP-binding positions include 81–85 and 136–139; these read DCPGH and NKVD. Residues 136 to 139 form a G4 region; it reads NKVD. Positions 174 to 176 are G5; the sequence is SGL.

The protein belongs to the TRAFAC class translation factor GTPase superfamily. Classic translation factor GTPase family. EF-Tu/EF-1A subfamily. As to quaternary structure, monomer.

The protein localises to the cytoplasm. It catalyses the reaction GTP + H2O = GDP + phosphate + H(+). In terms of biological role, GTP hydrolase that promotes the GTP-dependent binding of aminoacyl-tRNA to the A-site of ribosomes during protein biosynthesis. This is Elongation factor Tu from Cyanothece sp. (strain PCC 7425 / ATCC 29141).